The chain runs to 130 residues: Small ribosomal subunit protein uS9 (130 aa).

The tract at residues 111–130 is disordered; it reads VERKKVGLHKARRATQFSKR. Over residues 116–130 the composition is skewed to basic residues; the sequence is VGLHKARRATQFSKR.

The protein belongs to the universal ribosomal protein uS9 family.

This is Small ribosomal subunit protein uS9 from Xylella fastidiosa (strain M23).